Consider the following 71-residue polypeptide: Small ribosomal subunit protein bS21 (71 aa).

Belongs to the bacterial ribosomal protein bS21 family.

The protein is Small ribosomal subunit protein bS21 of Shewanella amazonensis (strain ATCC BAA-1098 / SB2B).